Consider the following 151-residue polypeptide: uncharacterized protein (151 aa).

Residues 123-151 (PAGQNAGTGPAQKLKTDETRCYERRGGSQ) form a disordered region. A compositionally biased stretch (basic and acidic residues) spans 136–151 (LKTDETRCYERRGGSQ).

This is an uncharacterized protein from Triticum aestivum (Wheat).